A 562-amino-acid chain; its full sequence is NAD-dependent malic enzyme (562 aa).

Catalysis depends on Tyr-101, which acts as the Proton donor. Position 154 (Arg-154) interacts with NAD(+). The active-site Proton acceptor is the Lys-172. The a divalent metal cation site is built by Glu-243, Asp-244, and Asp-267. NAD(+)-binding residues include Asp-267 and Asn-415.

This sequence belongs to the malic enzymes family. As to quaternary structure, homotetramer. The cofactor is Mg(2+). Mn(2+) is required as a cofactor.

The catalysed reaction is (S)-malate + NAD(+) = pyruvate + CO2 + NADH. It carries out the reaction oxaloacetate + H(+) = pyruvate + CO2. This chain is NAD-dependent malic enzyme, found in Shewanella putrefaciens (strain CN-32 / ATCC BAA-453).